The sequence spans 437 residues: 3-ketoacyl-CoA thiolase (437 aa).

The Acyl-thioester intermediate role is filled by C99. Catalysis depends on proton acceptor residues H392 and C422.

This sequence belongs to the thiolase-like superfamily. Thiolase family. In terms of assembly, heterotetramer of two alpha chains (FadJ) and two beta chains (FadI).

The protein resides in the cytoplasm. It carries out the reaction an acyl-CoA + acetyl-CoA = a 3-oxoacyl-CoA + CoA. The protein operates within lipid metabolism; fatty acid beta-oxidation. Functionally, catalyzes the final step of fatty acid oxidation in which acetyl-CoA is released and the CoA ester of a fatty acid two carbons shorter is formed. This Pectobacterium atrosepticum (strain SCRI 1043 / ATCC BAA-672) (Erwinia carotovora subsp. atroseptica) protein is 3-ketoacyl-CoA thiolase.